We begin with the raw amino-acid sequence, 129 residues long: Small ribosomal subunit protein uS11 (129 aa).

It belongs to the universal ribosomal protein uS11 family. As to quaternary structure, part of the 30S ribosomal subunit. Interacts with proteins S7 and S18. Binds to IF-3.

Functionally, located on the platform of the 30S subunit, it bridges several disparate RNA helices of the 16S rRNA. Forms part of the Shine-Dalgarno cleft in the 70S ribosome. This chain is Small ribosomal subunit protein uS11, found in Xanthobacter autotrophicus (strain ATCC BAA-1158 / Py2).